Here is a 317-residue protein sequence, read N- to C-terminus: Methionyl-tRNA formyltransferase (317 aa).

113–116 lines the (6S)-5,6,7,8-tetrahydrofolate pocket; the sequence is SLLP.

This sequence belongs to the Fmt family.

It carries out the reaction L-methionyl-tRNA(fMet) + (6R)-10-formyltetrahydrofolate = N-formyl-L-methionyl-tRNA(fMet) + (6S)-5,6,7,8-tetrahydrofolate + H(+). Attaches a formyl group to the free amino group of methionyl-tRNA(fMet). The formyl group appears to play a dual role in the initiator identity of N-formylmethionyl-tRNA by promoting its recognition by IF2 and preventing the misappropriation of this tRNA by the elongation apparatus. The protein is Methionyl-tRNA formyltransferase of Pseudomonas fluorescens (strain SBW25).